The primary structure comprises 320 residues: uncharacterized protein (320 aa).

Arg-61 carries the post-translational modification Omega-N-methylarginine. The tract at residues 299-320 is disordered; that stretch reads LHLQHQKQTSKDAGRQTPERKA. The span at 307–320 shows a compositional bias: basic and acidic residues; it reads TSKDAGRQTPERKA. A Phosphothreonine modification is found at Thr-315.

This is an uncharacterized protein from Mus musculus (Mouse).